A 431-amino-acid chain; its full sequence is Glucose-1-phosphate adenylyltransferase (431 aa).

Residue Lys39 coordinates beta-D-fructose 1,6-bisphosphate. AMP is bound by residues Arg40, His46, and Arg52. Tyr114 lines the alpha-D-glucose 1-phosphate pocket. Arg130 provides a ligand contact to AMP. Residues Gly179, 194–195, and Ser212 each bind alpha-D-glucose 1-phosphate; that span reads EK. AMP is bound by residues Glu370 and Arg386. Beta-D-fructose 1,6-bisphosphate is bound by residues 419-423 and 429-431; these read REMLR and QER.

The protein belongs to the bacterial/plant glucose-1-phosphate adenylyltransferase family. In terms of assembly, homotetramer.

The catalysed reaction is alpha-D-glucose 1-phosphate + ATP + H(+) = ADP-alpha-D-glucose + diphosphate. Its pathway is glycan biosynthesis; glycogen biosynthesis. Its activity is regulated as follows. Allosterically activated by fructose-1,6-bisphosphate (F16BP) and inhibited by AMP. In terms of biological role, involved in the biosynthesis of ADP-glucose, a building block required for the elongation reactions to produce glycogen. Catalyzes the reaction between ATP and alpha-D-glucose 1-phosphate (G1P) to produce pyrophosphate and ADP-Glc. In Salmonella paratyphi C (strain RKS4594), this protein is Glucose-1-phosphate adenylyltransferase.